Here is a 615-residue protein sequence, read N- to C-terminus: Ankyrin repeat and LEM domain-containing protein 1 (615 aa).

ANK repeat units lie at residues 39–71, 75–104, and 108–137; these read DGAA…DPNA, EALT…DPAL, and DGLR…RTRT. Positions 138–210 are disordered; it reads RTRIGAETQE…DKHGSSASPP (73 aa). Residues 271-280 carry the Nuclear export signal motif; the sequence is LNARLQALTL. Residues 283-294 show a composition bias toward polar residues; it reads PNAAGFQSSPSS. Positions 283–315 are disordered; that stretch reads PNAAGFQSSPSSMPLLDRSPAHSPPRTPTPGAS. Residues 355 to 399 enclose the LEM domain; that stretch reads HLPVSTVSDLELLKGLRALGENPHPITPFTRQLYHQQLEEAQIAP. Residues 448-566 form the GIY-YIG domain; sequence KSSFTYLLLD…ALGIQTLTNQ (119 aa). Residues 579 to 586 carry the Nuclear localization signal motif; that stretch reads PPARRRRL.

As to quaternary structure, interacts (via LEM domain) with BANF1; the interaction may favor BANF1 dimerization. Expression is predominant in adult bone marrow.

The protein resides in the cytoplasm. It is found in the nucleus. Functionally, endonuclease that probably plays a role in the DNA damage response and DNA repair. This chain is Ankyrin repeat and LEM domain-containing protein 1 (ANKLE1), found in Homo sapiens (Human).